Here is a 385-residue protein sequence, read N- to C-terminus: MGMGKDIFEITVNGLKLVVIFLMMVQAVPILVWLERRGSAFIQDRLGPNRVGPLGLVQLLADAVKFLNKENFMPQTAKPFLYYAAPIFALIPGAVAFSAIPLSSPIQVGTFEMFGSTWGPYTFLVQGYDIGVGIVFILGVSSLAAYTLLMAGWGSGNKYTLMGALRASAQTISYELALGLSIVGVIMLYGTFNLTEMTLAQQGPLAFSFLGHTITANWLPNWGIFYQPVGALLFFSAAFAESNRLPFDLAEGESELVGGFHTEYGGFKFNMFFIGEYGHMMIASGLMVLFFFGGYTIPYVSVAELNEWAAGVASTAGKASALVALIHFLVFNIKFGFFMWVFIWVRWTLPRFRYDQLMDLGWKTMLPWALANTIITAFVIYIASL.

Helical transmembrane passes span 14-34 (GLKL…LVWL), 80-100 (FLYY…FSAI), 130-150 (IGVG…TLLM), 172-192 (ISYE…YGTF), 219-239 (LPNW…SAAF), 280-300 (MMIA…IPYV), 325-345 (LIHF…FIWV), and 365-385 (MLPW…IASL).

It belongs to the complex I subunit 1 family. As to quaternary structure, NDH-1 is composed of 14 different subunits. Subunits NuoA, H, J, K, L, M, N constitute the membrane sector of the complex.

It localises to the cell inner membrane. The catalysed reaction is a quinone + NADH + 5 H(+)(in) = a quinol + NAD(+) + 4 H(+)(out). NDH-1 shuttles electrons from NADH, via FMN and iron-sulfur (Fe-S) centers, to quinones in the respiratory chain. The immediate electron acceptor for the enzyme in this species is believed to be ubiquinone. Couples the redox reaction to proton translocation (for every two electrons transferred, four hydrogen ions are translocated across the cytoplasmic membrane), and thus conserves the redox energy in a proton gradient. This subunit may bind ubiquinone. The polypeptide is NADH-quinone oxidoreductase subunit H (Bdellovibrio bacteriovorus (strain ATCC 15356 / DSM 50701 / NCIMB 9529 / HD100)).